Reading from the N-terminus, the 247-residue chain is Cell division protein ZapD (247 aa).

Belongs to the ZapD family. Interacts with FtsZ.

It is found in the cytoplasm. Cell division factor that enhances FtsZ-ring assembly. Directly interacts with FtsZ and promotes bundling of FtsZ protofilaments, with a reduction in FtsZ GTPase activity. The sequence is that of Cell division protein ZapD from Escherichia coli O7:K1 (strain IAI39 / ExPEC).